A 97-amino-acid polypeptide reads, in one-letter code: Cell division topological specificity factor (97 aa).

This sequence belongs to the MinE family.

Its function is as follows. Prevents the cell division inhibition by proteins MinC and MinD at internal division sites while permitting inhibition at polar sites. This ensures cell division at the proper site by restricting the formation of a division septum at the midpoint of the long axis of the cell. This is Cell division topological specificity factor from Synechococcus sp. (strain RCC307).